A 331-amino-acid chain; its full sequence is MTKANHHIFADGELSRKEGTLRIDTLEGETKYLPVESIDALYLHGQISFNTRALGLLNKHGVPVHIFGWKDYYRGSYLPKRSQLSGNTVVEQVRAYDNTERRLRIGHRIIEASIHNMRANLQYYSGRRGDFDSVVETLRELKTAVSDTQRIDELRAVEGDARKRYYDCFDSILEAPFRLAKREYNPPSNETNALISFLNGMVYTSCVSAIRKTALDPTVGFVHEPGERRFTLSLDIADIFKPILADRLVFRLVNRKQITTDDFETELAGCLLTEQGRLTVLEEFERSLDQTVQHPRLKRKVSFKTLIQTDVYSLKKHLLTGEPYHATEKWW.

Mn(2+) contacts are provided by Glu-158, His-223, and Asp-238.

Belongs to the CRISPR-associated endonuclease Cas1 family. Homodimer, forms a heterotetramer with a Cas2 homodimer. It depends on Mg(2+) as a cofactor. The cofactor is Mn(2+).

Functionally, CRISPR (clustered regularly interspaced short palindromic repeat), is an adaptive immune system that provides protection against mobile genetic elements (viruses, transposable elements and conjugative plasmids). CRISPR clusters contain spacers, sequences complementary to antecedent mobile elements, and target invading nucleic acids. CRISPR clusters are transcribed and processed into CRISPR RNA (crRNA). Acts as a dsDNA endonuclease. Involved in the integration of spacer DNA into the CRISPR cassette. Plasmid targeted by CRISPR locus P1 transform wild-type cells very poorly. The sequence is that of CRISPR-associated endonuclease Cas1 from Haloferax volcanii (strain ATCC 29605 / DSM 3757 / JCM 8879 / NBRC 14742 / NCIMB 2012 / VKM B-1768 / DS2) (Halobacterium volcanii).